A 995-amino-acid polypeptide reads, in one-letter code: Endo-beta-N-acetylglucosaminidase EndoS (995 aa).

The first 36 residues, 1 to 36, serve as a signal peptide directing secretion; the sequence is MDKHLLVKRTLGCVCAATLMGAALATHHDSLNTVKA. The 321-residue stretch at 112 to 432 folds into the GH18 domain; sequence SLYGGYFRTW…KDATDNIFHS (321 aa). H151, W153, and R186 together coordinate a glycoprotein. E235 (proton donor) is an active-site residue. Positions 237, 303, 305, 349, 350, 356, and 402 each coordinate a glycoprotein. LRR repeat units follow at residues 437–460, 478–503, 562–585, and 586–609; these read SKAL…DFPD, LERF…KFKK, LTGL…DAAT, and LTSL…ENRQ. Residues 765–923 are carbohydrate-binding module (CBM); that stretch reads MVNLAEGATV…VPELQILGYP (159 aa). Positions 786, 789, 791, 915, and 916 each coordinate Ca(2+). The segment at 924 to 995 is three-helix bundle (3H); it reads LPNADTIMKT…CIEKRQLLKK (72 aa).

Belongs to the glycosyl hydrolase 18 family. Cleaved by SpeB protease; leading to loss of endoglucosidase activity. EndoS is produced and secreted prior to SpeB, suggesting that it is degraded after acting as a host immune evasion factor.

It localises to the secreted. It is found in the host extracellular space. The enzyme catalyses an N(4)-(oligosaccharide-(1-&gt;3)-[oligosaccharide-(1-&gt;6)]-beta-D-Man-(1-&gt;4)-beta-D-GlcNAc-(1-&gt;4)-alpha-D-GlcNAc)-L-asparaginyl-[protein] + H2O = an oligosaccharide-(1-&gt;3)-[oligosaccharide-(1-&gt;6)]-beta-D-Man-(1-&gt;4)-D-GlcNAc + N(4)-(N-acetyl-beta-D-glucosaminyl)-L-asparaginyl-[protein]. Endoglucosidase that acts as a host immune evasion factor by mediating hydrolysis of the N-linked glycan from the Fc region of host immunoglobulin-gamma (IgG) during infection. Specifically catalyzes the hydrolysis of the beta-1,4 linkage between the first two N-acetylglucosamine residues of the complex-type N-linked glycan located on 'Asn-297' of the Fc region of IgG antibodies (IGHG1, IGHG2, IGHG3 or IGHG4), thereby preventing interaction between IgGs and Fc receptors and ability to activate the complement pathway. Shows a specificity for biantennary complex type N-glycans; does neither cleave larger complex type glycans nor oligomannose and nor hybrid-type glycans. Specifically acts on IgGs; does not act on immunoglobulin alpha, beta, delta or mu. The sequence is that of Endo-beta-N-acetylglucosaminidase EndoS from Streptococcus pyogenes serotype M1.